A 108-amino-acid chain; its full sequence is Peptidyl-prolyl cis-trans isomerase Fkbp12 (108 aa).

Residues 1 to 21 (MGVQVVPIAPGDGSTYPKNGQ) form a disordered region. The PPIase FKBP-type domain maps to 20 to 108 (GQKVTVHYTG…TFDVELLKVE (89 aa)).

It belongs to the FKBP-type PPIase family. FKBP1 subfamily.

It is found in the cytoplasm. The catalysed reaction is [protein]-peptidylproline (omega=180) = [protein]-peptidylproline (omega=0). Functionally, PPIases accelerate the folding of proteins. It catalyzes the cis-trans isomerization of proline imidic peptide bonds in oligopeptides. Binds to ligand-free TGF beta type I receptor, from which it is released upon a ligand-induced, type II receptor mediated phosphorylation of the type I receptor. Binding is inhibitory to the signaling pathways of the TGF beta family ligands. This is Peptidyl-prolyl cis-trans isomerase Fkbp12 from Drosophila melanogaster (Fruit fly).